A 1139-amino-acid chain; its full sequence is Solute carrier family 12 member 5 (1139 aa).

2 disordered regions span residues 1-62 and 95-116; these read MSRR…KGRE and PQGS…KPVQ. Topologically, residues 1–98 are cytoplasmic; that stretch reads MSRRFTVTSL…ANYTNLPQGS (98 aa). Basic and acidic residues predominate over residues 21-45; that stretch reads PESRRHSVADPRRLPREDVKGDGNP. Positions 46 to 55 are enriched in polar residues; it reads KESSPFINST. T57 is subject to Phosphothreonine. Residues 98-111 are compositionally biased toward basic and acidic residues; it reads SKEHEEAENNEGGK. Residues 99-120 form a discontinuously helical membrane-spanning segment; that stretch reads KEHEEAENNEGGKKKPVQAPRM. K113 is a binding site for K(+). The Extracellular segment spans residues 121-129; the sequence is GTFMGVYLP. The chain crosses the membrane as a helical span at residues 130–151; it reads CLQNIFGVILFLRLTWVVGIAG. Residues 152 to 174 lie on the Cytoplasmic side of the membrane; the sequence is IMESFCMVFICCSCTMLTAISMS. Residues 175–203 traverse the membrane as a helical segment; the sequence is AIATNGVVPAGGSYYMISRSLGPEFGGAV. Residue A184 coordinates chloride. The Extracellular portion of the chain corresponds to 204 to 229; that stretch reads GLCFYLGTTFAGAMYILGTIEILLAY. Transmembrane regions (helical) follow at residues 230–250 and 251–276; these read LFPA…AAML and NNMR…KYVN. Residues 277–402 lie on the Extracellular side of the membrane; the sequence is KFALVFLGCV…ERRGMPSVGL (126 aa). Cysteines 310 and 325 form a disulfide. N-linked (GlcNAc...) asparagine glycans are attached at residues N314, N333, N351, and N362. A disulfide bond links C345 and C354. Residues 403-420 traverse the membrane as a helical segment; the sequence is ADGTPVDMDHPYVFSDMT. M410 contacts K(+). Chloride-binding residues include Y414 and V415. Residues 421 to 429 are Cytoplasmic-facing; sequence SYFTLLVGI. The helical transmembrane segment at 430–453 threads the bilayer; sequence YFPSVTGIMAGSNRSGDLRDAQKS. D446 lines the K(+) pocket. The Extracellular portion of the chain corresponds to 454 to 485; that stretch reads IPTGTILAIATTSAVYISSVVLFGACIEGVVL. A helical transmembrane segment spans residues 486–513; the sequence is RDKFGEAVNGNLVVGTLAWPSPWVIVIG. The Cytoplasmic segment spans residues 514 to 534; that stretch reads SFFSTCGAGLQSLTGAPRLLQ. Transmembrane regions (helical) follow at residues 535–555 and 556–578; these read AISR…KANG and EPTW…ASLD. Chloride is bound at residue E569. Residues 579–592 lie on the Cytoplasmic side of the membrane; the sequence is EVAPILSMFFLMCY. 2 helical membrane passes run 593–615 and 616–632; these read MFVN…PRFR and YYHW…CLAL. Residues 633–1139 lie on the Cytoplasmic side of the membrane; it reads MFICSWYYAL…GGREVITIYS (507 aa). The scissor helix stretch occupies residues 667-681; it reads GIRGLSLSAARYALL. A Phosphothreonine; by OXSR1 and STK39 modification is found at T929. Positions 943-1025 are disordered; it reads HLTKNERERE…PEGEGETDPE (83 aa). Basic and acidic residues predominate over residues 945 to 962; sequence TKNEREREIQSITDESRG. The span at 982-994 shows a compositional bias: acidic residues; sequence TACDNEEKPEEEV. A compositionally biased stretch (low complexity) spans 1003–1012; it reads PSCPSSSPSP. Position 1030 is a phosphothreonine; by OXSR1 and STK39 (T1030). Residues 1033–1052 are disordered; sequence KDKSAAQKNKGPSPVSSEGI. 3 positions are modified to phosphoserine: S1045, S1048, and S1049.

Belongs to the SLC12A transporter family. K/Cl co-transporter subfamily. In terms of assembly, homodimer; adopts a domain-swap conformation at the scissor helices connecting the transmembrane domain and C-terminal domain. Heterodimer wHeterodimer with K-Cl cotransporters SLC12A6 and SLC12A7. Interacts with AP2A1. Phosphorylated at Thr-929 and Thr-1030 by OXSR1/OSR1 and STK39/SPAK downstream of WNK kinases (WNK1, WNK2, WNK3 or WNK4), inhibiting the potassium-chloride cotransport activity. In terms of tissue distribution, highly expressed in brain. Not detected in other tissues. Highly expressed in pyramidal neurons and in neurons throughout the cortex, hippocampus, the granular layer of the cerebellum and in groups of neurons throughout the brainstem. Barely detectable in dorsal-root ganglions.

The protein localises to the cell membrane. It localises to the cell projection. It is found in the dendrite. It catalyses the reaction K(+)(in) + chloride(in) = K(+)(out) + chloride(out). Its activity is regulated as follows. Inhibited following phosphorylation by OXSR1/OSR1 and STK39/SPAK: phosphorylation takes place downstream of WNK kinases (WNK1, WNK2, WNK3 or WNK4) in response to hyperosmotic stress and subsequent cell shrinkage. Mediates electroneutral potassium-chloride cotransport in mature neurons and is required for neuronal Cl(-) homeostasis. As major extruder of intracellular chloride, it establishes the low neuronal Cl(-) levels required for chloride influx after binding of GABA-A and glycine to their receptors, with subsequent hyperpolarization and neuronal inhibition. Involved in the regulation of dendritic spine formation and maturation. The sequence is that of Solute carrier family 12 member 5 (Slc12a5) from Rattus norvegicus (Rat).